We begin with the raw amino-acid sequence, 351 residues long: Purine permease 3 (351 aa).

Transmembrane regions (helical) follow at residues alanine 4 to methionine 24, isoleucine 35 to phenylalanine 55, phenylalanine 72 to phenylalanine 92, threonine 108 to valine 128, phenylalanine 132 to methionine 152, isoleucine 168 to valine 188, phenylalanine 207 to glycine 227, valine 249 to phenylalanine 269, leucine 274 to phenylalanine 294, and glycine 304 to serine 324. In terms of domain architecture, EamA spans glycine 45 to methionine 152. The tract at residues arginine 329 to cysteine 351 is disordered.

Belongs to the purine permeases (TC 2.A.7.14) family. In terms of tissue distribution, restricted to pollen.

Its subcellular location is the membrane. May be involved in transport of purine derivatives during pollen germination and tube elongation. This chain is Purine permease 3 (PUP3), found in Arabidopsis thaliana (Mouse-ear cress).